The sequence spans 331 residues: MIDTSIPLVDLHRHLDGNVRVNTIWELGHQHGIALPADSLETLAPFVQIQGKETSLVAFLKKLDWMVAVLADLDAVKRVAYENVADAALSGLDYAELRFSPYYMAMNHKLPIEGVVEAVVDGVKAGLKDYNVKINLIGIMSRSFGQAACTQELEGLLAHKQHLVAMDLAGDELGFPGELFNDHFKRVRDAGLAITAHAGEAAGSQSMWQAIQELGATRIGHGVNAIHDPRLMEYLAKHRIGIESCPTSNLHTSTVVSYAEHPFRTFMDAGVLISLNTDDPGVSAIDIKHEYRIAKSELKLTDAELAQVQRNGVEMAFLSDSERKALYAAKV.

The Zn(2+) site is built by histidine 12 and histidine 14. Positions 14, 16, and 170 each coordinate substrate. Residue histidine 197 participates in Zn(2+) binding. Glutamate 200 functions as the Proton donor in the catalytic mechanism. Residue aspartate 278 participates in Zn(2+) binding. Substrate is bound at residue aspartate 279.

Belongs to the metallo-dependent hydrolases superfamily. Adenosine and AMP deaminases family. Adenosine deaminase subfamily. Requires Zn(2+) as cofactor.

The catalysed reaction is adenosine + H2O + H(+) = inosine + NH4(+). It carries out the reaction 2'-deoxyadenosine + H2O + H(+) = 2'-deoxyinosine + NH4(+). Catalyzes the hydrolytic deamination of adenosine and 2-deoxyadenosine. In Shewanella sp. (strain W3-18-1), this protein is Adenosine deaminase.